Reading from the N-terminus, the 447-residue chain is Probable 3-deoxy-D-manno-octulosonic acid transferase, mitochondrial (447 aa).

A mitochondrion-targeting transit peptide spans 1-32 (MKLGVFVYRLYRALTYGVSPLIHLHIRWRRLR). The active-site Proton acceptor is the glutamate 66. Residues 278-279 (PR), 320-322 (LGE), and 347-350 (NLSE) contribute to the CMP site.

It belongs to the glycosyltransferase group 1 family. Glycosyltransferase 30 subfamily. In terms of tissue distribution, expressed in leaves, stems and flowers.

It is found in the mitochondrion. The enzyme catalyses lipid IVA (E. coli) + CMP-3-deoxy-beta-D-manno-octulosonate = alpha-Kdo-(2-&gt;6)-lipid IVA (E. coli) + CMP + H(+). It catalyses the reaction alpha-Kdo-(2-&gt;6)-lipid IVA (E. coli) + CMP-3-deoxy-beta-D-manno-octulosonate = alpha-Kdo-(2-&gt;4)-alpha-Kdo-(2-&gt;6)-lipid IVA (E. coli) + CMP + H(+). It participates in glycolipid biosynthesis; KDO(2)-lipid A biosynthesis; KDO(2)-lipid A from CMP-3-deoxy-D-manno-octulosonate and lipid IV(A): step 1/4. The protein operates within glycolipid biosynthesis; KDO(2)-lipid A biosynthesis; KDO(2)-lipid A from CMP-3-deoxy-D-manno-octulosonate and lipid IV(A): step 2/4. Its function is as follows. Involved in the biosynthesis of lipid A, a phosphorylated glycolipid that in bacteria anchors the lipopolysaccharide to the outer membrane of the cell. Catalyzes the transfer of two 3-deoxy-D-manno-octulosonate (Kdo) residues from CMP-Kdo to lipid IV(A), the tetraacyldisaccharide-1,4'-bisphosphate precursor of lipid A. Lipid A-like molecules in plants may serve as structural components of the outer membranes of mitochondria and/or chloroplasts, or may be involved in signal transduction or plant defense responses. The protein is Probable 3-deoxy-D-manno-octulosonic acid transferase, mitochondrial (KDTA) of Arabidopsis thaliana (Mouse-ear cress).